Reading from the N-terminus, the 438-residue chain is Serine hydroxymethyltransferase (438 aa).

(6S)-5,6,7,8-tetrahydrofolate-binding positions include Leu133 and 137-139 (GHL). N6-(pyridoxal phosphate)lysine is present on Lys242.

It belongs to the SHMT family. Homodimer. The cofactor is pyridoxal 5'-phosphate.

It is found in the cytoplasm. The enzyme catalyses (6R)-5,10-methylene-5,6,7,8-tetrahydrofolate + glycine + H2O = (6S)-5,6,7,8-tetrahydrofolate + L-serine. It functions in the pathway one-carbon metabolism; tetrahydrofolate interconversion. The protein operates within amino-acid biosynthesis; glycine biosynthesis; glycine from L-serine: step 1/1. Functionally, catalyzes the reversible interconversion of serine and glycine with tetrahydrofolate (THF) serving as the one-carbon carrier. This reaction serves as the major source of one-carbon groups required for the biosynthesis of purines, thymidylate, methionine, and other important biomolecules. Also exhibits THF-independent aldolase activity toward beta-hydroxyamino acids, producing glycine and aldehydes, via a retro-aldol mechanism. In Brucella suis (strain ATCC 23445 / NCTC 10510), this protein is Serine hydroxymethyltransferase.